The following is a 476-amino-acid chain: Bifunctional protein HldE (476 aa).

Residues 1-318 form a ribokinase region; sequence MAQYSAEFKQ…ENAIHARPET (318 aa). Residue 195–198 coordinates ATP; that stretch reads NMSE. The active site involves Asp264. A cytidylyltransferase region spans residues 344 to 476; it reads MTNGCFDILH…VIEKIKLLKD (133 aa).

The protein in the N-terminal section; belongs to the carbohydrate kinase PfkB family. It in the C-terminal section; belongs to the cytidylyltransferase family. As to quaternary structure, homodimer.

It carries out the reaction D-glycero-beta-D-manno-heptose 7-phosphate + ATP = D-glycero-beta-D-manno-heptose 1,7-bisphosphate + ADP + H(+). It catalyses the reaction D-glycero-beta-D-manno-heptose 1-phosphate + ATP + H(+) = ADP-D-glycero-beta-D-manno-heptose + diphosphate. It functions in the pathway nucleotide-sugar biosynthesis; ADP-L-glycero-beta-D-manno-heptose biosynthesis; ADP-L-glycero-beta-D-manno-heptose from D-glycero-beta-D-manno-heptose 7-phosphate: step 1/4. Its pathway is nucleotide-sugar biosynthesis; ADP-L-glycero-beta-D-manno-heptose biosynthesis; ADP-L-glycero-beta-D-manno-heptose from D-glycero-beta-D-manno-heptose 7-phosphate: step 3/4. Its function is as follows. Catalyzes the phosphorylation of D-glycero-D-manno-heptose 7-phosphate at the C-1 position to selectively form D-glycero-beta-D-manno-heptose-1,7-bisphosphate. Catalyzes the ADP transfer from ATP to D-glycero-beta-D-manno-heptose 1-phosphate, yielding ADP-D-glycero-beta-D-manno-heptose. In Haemophilus influenzae (strain 86-028NP), this protein is Bifunctional protein HldE.